We begin with the raw amino-acid sequence, 55 residues long: Rubredoxin-1 (55 aa).

The 54-residue stretch at 1 to 54 (MKKWQCVVCGLIYDEAKGWPEEGIEAGTRWEDVPEDWLCPDCGVGKLDFEMIEI) folds into the Rubredoxin-like domain. Residues cysteine 6, cysteine 9, cysteine 39, and cysteine 42 each coordinate Fe cation.

Belongs to the rubredoxin family. Requires Fe(3+) as cofactor.

The protein resides in the cytoplasm. Its pathway is hydrocarbon metabolism; alkane degradation. Its function is as follows. Involved in the hydrocarbon hydroxylating system, which transfers electrons from NADH to rubredoxin reductase and then through rubredoxin to alkane 1 monooxygenase. The protein is Rubredoxin-1 (rubA1) of Pseudomonas aeruginosa (strain ATCC 15692 / DSM 22644 / CIP 104116 / JCM 14847 / LMG 12228 / 1C / PRS 101 / PAO1).